The primary structure comprises 64 residues: Bactridin-2 (64 aa).

The 63-residue stretch at 1–63 folds into the LCN-type CS-alpha/beta domain; that stretch reads KDGYLVGNDG…TWNRATNRCG (63 aa). Disulfide bonds link Cys11-Cys62, Cys15-Cys37, Cys23-Cys43, and Cys27-Cys45.

The protein belongs to the long (4 C-C) scorpion toxin superfamily. Sodium channel inhibitor family. Beta subfamily. In terms of tissue distribution, expressed by the venom gland.

The protein resides in the secreted. Shows antibacterial activity against both Gram-positive bacteria (B.subtilis, M.luteus, E.faecalis) and Gram-negative bacteria (P.aeruginosa, Y.enterocolitica, A.calcoaceticus). Modifies membrane sodium permeability on Y.enterocolitica. Is toxic to mice, but is not to crabs. Induces concentration dependent haemolysis in human erythrocytes. Acts by inhibiting the sodium (Nav) currents. In Tityus discrepans (Venezuelan scorpion), this protein is Bactridin-2.